A 307-amino-acid polypeptide reads, in one-letter code: Methionyl-tRNA formyltransferase (307 aa).

108-111 (SLLP) lines the (6S)-5,6,7,8-tetrahydrofolate pocket.

It belongs to the Fmt family.

The catalysed reaction is L-methionyl-tRNA(fMet) + (6R)-10-formyltetrahydrofolate = N-formyl-L-methionyl-tRNA(fMet) + (6S)-5,6,7,8-tetrahydrofolate + H(+). Attaches a formyl group to the free amino group of methionyl-tRNA(fMet). The formyl group appears to play a dual role in the initiator identity of N-formylmethionyl-tRNA by promoting its recognition by IF2 and preventing the misappropriation of this tRNA by the elongation apparatus. The chain is Methionyl-tRNA formyltransferase from Xanthomonas campestris pv. campestris (strain 8004).